Here is a 61-residue protein sequence, read N- to C-terminus: Small ribosomal subunit protein uS14 (61 aa).

Positions 24, 27, 40, and 43 each coordinate Zn(2+).

It belongs to the universal ribosomal protein uS14 family. Zinc-binding uS14 subfamily. In terms of assembly, part of the 30S ribosomal subunit. Contacts proteins S3 and S10. Requires Zn(2+) as cofactor.

Binds 16S rRNA, required for the assembly of 30S particles and may also be responsible for determining the conformation of the 16S rRNA at the A site. The polypeptide is Small ribosomal subunit protein uS14 (Elusimicrobium minutum (strain Pei191)).